We begin with the raw amino-acid sequence, 182 residues long: ATP synthase subunit delta (182 aa).

The protein belongs to the ATPase delta chain family. In terms of assembly, F-type ATPases have 2 components, F(1) - the catalytic core - and F(0) - the membrane proton channel. F(1) has five subunits: alpha(3), beta(3), gamma(1), delta(1), epsilon(1). F(0) has three main subunits: a(1), b(2) and c(10-14). The alpha and beta chains form an alternating ring which encloses part of the gamma chain. F(1) is attached to F(0) by a central stalk formed by the gamma and epsilon chains, while a peripheral stalk is formed by the delta and b chains.

The protein resides in the cell inner membrane. Functionally, f(1)F(0) ATP synthase produces ATP from ADP in the presence of a proton or sodium gradient. F-type ATPases consist of two structural domains, F(1) containing the extramembraneous catalytic core and F(0) containing the membrane proton channel, linked together by a central stalk and a peripheral stalk. During catalysis, ATP synthesis in the catalytic domain of F(1) is coupled via a rotary mechanism of the central stalk subunits to proton translocation. Its function is as follows. This protein is part of the stalk that links CF(0) to CF(1). It either transmits conformational changes from CF(0) to CF(1) or is implicated in proton conduction. This Sulfurihydrogenibium azorense (strain DSM 15241 / OCM 825 / Az-Fu1) protein is ATP synthase subunit delta.